A 440-amino-acid chain; its full sequence is Thymidine phosphorylase (440 aa).

It belongs to the thymidine/pyrimidine-nucleoside phosphorylase family. As to quaternary structure, homodimer.

The enzyme catalyses thymidine + phosphate = 2-deoxy-alpha-D-ribose 1-phosphate + thymine. The protein operates within pyrimidine metabolism; dTMP biosynthesis via salvage pathway; dTMP from thymine: step 1/2. Functionally, the enzymes which catalyze the reversible phosphorolysis of pyrimidine nucleosides are involved in the degradation of these compounds and in their utilization as carbon and energy sources, or in the rescue of pyrimidine bases for nucleotide synthesis. This is Thymidine phosphorylase from Salmonella arizonae (strain ATCC BAA-731 / CDC346-86 / RSK2980).